The chain runs to 205 residues: Imidazoleglycerol-phosphate dehydratase (205 aa).

This sequence belongs to the imidazoleglycerol-phosphate dehydratase family.

It localises to the cytoplasm. It catalyses the reaction D-erythro-1-(imidazol-4-yl)glycerol 3-phosphate = 3-(imidazol-4-yl)-2-oxopropyl phosphate + H2O. It functions in the pathway amino-acid biosynthesis; L-histidine biosynthesis; L-histidine from 5-phospho-alpha-D-ribose 1-diphosphate: step 6/9. The chain is Imidazoleglycerol-phosphate dehydratase from Chloroflexus aggregans (strain MD-66 / DSM 9485).